A 395-amino-acid polypeptide reads, in one-letter code: Isoafricanol synthase (395 aa).

The Mg(2+) site is built by D95, N246, S250, and E254. Residues 346 to 357 show a composition bias toward basic and acidic residues; it reads TEAVSGGRERPW. Residues 346–395 are disordered; sequence TEAVSGGRERPWARLTGAEDLIRAGRGAPPPPGSGPDTRQPMPSEPSQLA.

The protein belongs to the terpene synthase family. The cofactor is Mg(2+).

The enzyme catalyses (2E,6E)-farnesyl diphosphate + H2O = (+)-isoafricanol + diphosphate. Functionally, catalyzes the cyclization of farnesyl diphosphate (FPP) to isoafricanol. In Streptomyces malaysiensis, this protein is Isoafricanol synthase.